A 546-amino-acid polypeptide reads, in one-letter code: ATP synthase subunit alpha (546 aa).

172–179 serves as a coordination point for ATP; the sequence is GDRKTGKT.

It belongs to the ATPase alpha/beta chains family. In terms of assembly, F-type ATPases have 2 components, CF(1) - the catalytic core - and CF(0) - the membrane proton channel. CF(1) has five subunits: alpha(3), beta(3), gamma(1), delta(1), epsilon(1). CF(0) has three main subunits: a(1), b(2) and c(9-12). The alpha and beta chains form an alternating ring which encloses part of the gamma chain. CF(1) is attached to CF(0) by a central stalk formed by the gamma and epsilon chains, while a peripheral stalk is formed by the delta and b chains.

The protein resides in the cell membrane. It carries out the reaction ATP + H2O + 4 H(+)(in) = ADP + phosphate + 5 H(+)(out). Produces ATP from ADP in the presence of a proton gradient across the membrane. The alpha chain is a regulatory subunit. This is ATP synthase subunit alpha from Corynebacterium efficiens (strain DSM 44549 / YS-314 / AJ 12310 / JCM 11189 / NBRC 100395).